The primary structure comprises 217 residues: Adenylate kinase (217 aa).

10–15 (GAGKGT) serves as a coordination point for ATP. The interval 30–59 (STGDMLRAQIKAGTELGMKAKAIMDAGGLV) is NMP. AMP contacts are provided by residues threonine 31, arginine 36, 57–59 (GLV), 85–88 (GFPR), and glutamine 92. An LID region spans residues 122–159 (GRRVHVASGRTYHVVFNPPKVAGKDDVTGEDLIQRDDD). ATP is bound by residues arginine 123 and 132–133 (TY). Arginine 156 and arginine 167 together coordinate AMP. Glycine 203 contributes to the ATP binding site.

It belongs to the adenylate kinase family. Monomer.

The protein localises to the cytoplasm. The catalysed reaction is AMP + ATP = 2 ADP. It functions in the pathway purine metabolism; AMP biosynthesis via salvage pathway; AMP from ADP: step 1/1. Its function is as follows. Catalyzes the reversible transfer of the terminal phosphate group between ATP and AMP. Plays an important role in cellular energy homeostasis and in adenine nucleotide metabolism. The chain is Adenylate kinase from Thiobacillus denitrificans (strain ATCC 25259 / T1).